The primary structure comprises 427 residues: Histidinol dehydrogenase (427 aa).

Positions 125, 186, and 209 each coordinate NAD(+). Residues Ser-234, Gln-256, and His-259 each contribute to the substrate site. Residues Gln-256 and His-259 each contribute to the Zn(2+) site. Catalysis depends on proton acceptor residues Glu-325 and His-326. 4 residues coordinate substrate: His-326, Asp-359, Glu-413, and His-419. Zn(2+) is bound at residue Asp-359. His-419 is a Zn(2+) binding site.

The protein belongs to the histidinol dehydrogenase family. Zn(2+) is required as a cofactor.

It catalyses the reaction L-histidinol + 2 NAD(+) + H2O = L-histidine + 2 NADH + 3 H(+). It functions in the pathway amino-acid biosynthesis; L-histidine biosynthesis; L-histidine from 5-phospho-alpha-D-ribose 1-diphosphate: step 9/9. Its function is as follows. Catalyzes the sequential NAD-dependent oxidations of L-histidinol to L-histidinaldehyde and then to L-histidine. The sequence is that of Histidinol dehydrogenase from Leptospira interrogans serogroup Icterohaemorrhagiae serovar copenhageni (strain Fiocruz L1-130).